We begin with the raw amino-acid sequence, 726 residues long: Beta-adducin (726 aa).

Positions 1–25 (MSEETVPEAASPPPPQGQPYFDRFS) are disordered. Serine 11 and serine 25 each carry phosphoserine. At threonine 55 the chain carries Phosphothreonine; by PKA. A phosphoserine mark is found at serine 60 and serine 344. Residues 425–444 (KQQKEKTRWLNTPNTYLRVN) form an interaction with calmodulin region. Residues 525 to 726 (AEKSRSPSTE…KSKKKEKVES (202 aa)) are disordered. Phosphoserine occurs at positions 530 and 532. Threonine 533 carries the phosphothreonine modification. Serine 535 bears the Phosphoserine mark. A compositionally biased stretch (basic and acidic residues) spans 566–586 (EEYKKEVERKKLELDGEKETA). A compositionally biased stretch (low complexity) spans 588 to 606 (EEPGSPAKSAPASPVQSPA). Residues serine 592, serine 596, serine 600, and serine 604 each carry the phosphoserine modification. Position 611 is a phosphothreonine (threonine 611). A phosphoserine mark is found at serine 613, serine 617, serine 619, and serine 621. The segment covering 621 to 631 (SLEEGTKKTET) has biased composition (basic and acidic residues). The segment covering 632–645 (SKAATTEPETTQPE) has biased composition (low complexity). A compositionally biased stretch (polar residues) spans 665–674 (GLSQMTTSAD). Threonine 675 is modified (phosphothreonine). A phosphoserine mark is found at serine 686, serine 689, serine 693, serine 697, serine 699, and serine 701. Residues 689-701 (SGPMSPEGSPSKS) are compositionally biased toward low complexity. A compositionally biased stretch (basic residues) spans 702-726 (PSKKKKKFRTPSFLKKSKKKEKVES). Serine 703 is modified (phosphoserine; by PKC). The tract at residues 704 to 721 (KKKKKFRTPSFLKKSKKK) is interaction with calmodulin. Serine 713 is subject to Phosphoserine; by PKA and PKC.

Belongs to the aldolase class II family. Adducin subfamily. Heterodimer of an alpha and a beta subunit. Found in a complex with ADD2, DMTN and SLC2A1. Interacts with SLC2A1. In terms of processing, the N-terminus is blocked. As to expression, expressed mainly in brain, spleen, kidney cortex and medulla, and heart. Also expressed in human umbilical vein endothelial cells, human vascular smooth muscle cells, kidney tubular cells and K-562 cell line.

The protein resides in the cytoplasm. The protein localises to the cytoskeleton. Its subcellular location is the cell membrane. Functionally, membrane-cytoskeleton-associated protein that promotes the assembly of the spectrin-actin network. Binds to the erythrocyte membrane receptor SLC2A1/GLUT1 and may therefore provide a link between the spectrin cytoskeleton to the plasma membrane. Binds to calmodulin. Calmodulin binds preferentially to the beta subunit. The sequence is that of Beta-adducin (ADD2) from Homo sapiens (Human).